Consider the following 399-residue polypeptide: Chorismate synthase (399 aa).

NADP(+) contacts are provided by Arg40 and Arg46. FMN is bound by residues Arg135–Ser137, Gln256–Ala257, Gly301, Lys316–Thr320, and Arg342.

It belongs to the chorismate synthase family. Homotetramer. It depends on FMNH2 as a cofactor.

It carries out the reaction 5-O-(1-carboxyvinyl)-3-phosphoshikimate = chorismate + phosphate. It functions in the pathway metabolic intermediate biosynthesis; chorismate biosynthesis; chorismate from D-erythrose 4-phosphate and phosphoenolpyruvate: step 7/7. Functionally, catalyzes the anti-1,4-elimination of the C-3 phosphate and the C-6 proR hydrogen from 5-enolpyruvylshikimate-3-phosphate (EPSP) to yield chorismate, which is the branch point compound that serves as the starting substrate for the three terminal pathways of aromatic amino acid biosynthesis. This reaction introduces a second double bond into the aromatic ring system. The protein is Chorismate synthase of Paenarthrobacter aurescens (strain TC1).